The sequence spans 768 residues: Cullin-3 (768 aa).

The tract at residues 677-698 (VAAKQGESDPERKETRQKVDDD) is disordered. Basic and acidic residues predominate over residues 682–698 (GESDPERKETRQKVDDD). The Cullin neddylation domain occupies 698–760 (DRKHEIEAAI…REYLARTPED (63 aa)). Residue Lys712 forms a Glycyl lysine isopeptide (Lys-Gly) (interchain with G-Cter in NEDD8) linkage.

It belongs to the cullin family. Component of multiple BCR (BTB-CUL3-RBX1) E3 ubiquitin-protein ligase complexes formed of cul3, rbx1 and a variable BTB domain-containing protein acting as both, adapter to cullin and substrate recognition subunit. Interacts with btbd6. Neddylated. Attachment of NEDD8 is required for the E3 ubiquitin-protein ligase activity of the SCF-like complex.

The protein resides in the nucleus. The protein operates within protein modification; protein ubiquitination. Its function is as follows. Probable core component of cullin-based SCF-like E3 ubiquitin-protein ligase complexes which mediate the ubiquitination and subsequent proteasomal degradation of target proteins. The E3 ubiquitin-protein ligase activity of the complex is dependent on the neddylation of the cullin subunit. Involved in ER-Golgi transport by regulating the size of COPII coats, thereby playing a key role in collagen export, which is required for embryonic stem (ES) cells division. May play a role in the regulation of mittotic entry via ubiquitination of aurka. This is Cullin-3 (cul3) from Xenopus tropicalis (Western clawed frog).